Consider the following 299-residue polypeptide: Taste receptor type 2 member 45 (299 aa).

Met-1 is a topological domain (extracellular). A helical membrane pass occupies residues 2–22; that stretch reads ITFLPIIFSILVVVTFVIGNF. The Cytoplasmic portion of the chain corresponds to 23–55; the sequence is ANGFIALVNSTEWVKRQKISFADQIVTALAVSR. The helical transmembrane segment at 56–76 threads the bilayer; the sequence is VGLLWVLLLNWYSTVLNPAFC. At 77-98 the chain is on the extracellular side; sequence SVELRTTAYNIWAVTGHFSNWP. The helical transmembrane segment at 99-119 threads the bilayer; that stretch reads ATSLSIFYLLKIANFSNLIFL. The Cytoplasmic segment spans residues 120–126; it reads RLKRRVK. A helical membrane pass occupies residues 127–147; that stretch reads SVILVVLLGPLLFLACHLFVV. At 148-178 the chain is on the extracellular side; it reads NMNQIVWTKEYEGNMTWKIKLRRAMYLSDTT. N-linked (GlcNAc...) asparagine glycosylation is present at Asn-161. The helical transmembrane segment at 179–199 threads the bilayer; it reads VTMLANLVPFTVTLISFLLLV. The Cytoplasmic portion of the chain corresponds to 200 to 229; sequence CSLCKHLKKMQLHGKGSQDPSTKVHIKVLQ. Residues 230 to 250 form a helical membrane-spanning segment; it reads TVISFFLLRAIYFVSVIISVW. Residues 251 to 259 are Extracellular-facing; it reads SFKNLENKP. A helical membrane pass occupies residues 260-280; that stretch reads VFMFCQAIGFSCSSAHPFILI. The Cytoplasmic portion of the chain corresponds to 281–299; that stretch reads WGNKKLKQTYLSVLWQMRY.

This sequence belongs to the G-protein coupled receptor T2R family. As to expression, expressed in subsets of taste receptor cells of the tongue and exclusively in gustducin-positive cells.

It localises to the membrane. Functionally, receptor that may play a role in the perception of bitterness and is gustducin-linked. May play a role in sensing the chemical composition of the gastrointestinal content. The activity of this receptor may stimulate alpha gustducin, mediate PLC-beta-2 activation and lead to the gating of TRPM5. The chain is Taste receptor type 2 member 45 (TAS2R45) from Homo sapiens (Human).